The following is a 499-amino-acid chain: MEEFQVYLELHKAHNFLYPLFFQEYIYALAHNHRLNRLNRSSLFQNGDYDNKFSSLIVKRLIFRMYQQNNFIISTKNLNQNTFFSHNKNLYYQIISVVLAVIVEIPFSIRFISSLEGKELVKSHNLQSIHSIFPFLEDKFSHLNYVLNVLIPHPIHLEILLQTLRYWIKDASSLHLLRFYLYEYSNLKNFFIPKKSTLNPRFFLFLYNSYVYQYESILFFLRKQSSHLQSNSFGILIERIYFYGKIESLLKVFIKKFQDILWLSKDPFMHYVRYRGKSILASKHGPLLISKWKYYFVNLWQCHFYVWSQSKRVHIKQLSKDYLNFLGYLSSLRLNFLVVRSQMLENSYLIDNVIKKFHTKIPMSSIIASLAKARFCNVLGHPISKSTWTDSSDSEILDRFVRIYRNLAHYYSGSSKKKNLYRIKYILRVSCVKTLARKHKSTVRAFLKRLGSDFLEEFLLEEEQVLSLMFSRVFSVSQRFYRVRIWYLDIFYINDFVNH.

The protein belongs to the intron maturase 2 family. MatK subfamily.

It localises to the plastid. The protein localises to the chloroplast. Its function is as follows. Usually encoded in the trnK tRNA gene intron. Probably assists in splicing its own and other chloroplast group II introns. This Batis maritima (Maritime saltwort) protein is Maturase K.